The sequence spans 300 residues: tRNA pseudouridine synthase B (300 aa).

Asp-38 functions as the Nucleophile in the catalytic mechanism.

This sequence belongs to the pseudouridine synthase TruB family. Type 1 subfamily.

It catalyses the reaction uridine(55) in tRNA = pseudouridine(55) in tRNA. Its function is as follows. Responsible for synthesis of pseudouridine from uracil-55 in the psi GC loop of transfer RNAs. The protein is tRNA pseudouridine synthase B of Dehalococcoides mccartyi (strain ATCC BAA-2266 / KCTC 15142 / 195) (Dehalococcoides ethenogenes (strain 195)).